Here is a 371-residue protein sequence, read N- to C-terminus: Otolith matrix protein 1 (371 aa).

The signal sequence occupies residues 1–21 (MDLPGGHLAVVLFLFVLVSMS). A Transferrin-like domain is found at 27 to 367 (IRWCTVSDAE…YTTILRAFEC (341 aa)).

In terms of assembly, interacts with OTOL1.

It is found in the secreted. In terms of biological role, required for normal otolith growth and deposition of otolin-1 in the otolith. This is Otolith matrix protein 1 (otomp) from Danio rerio (Zebrafish).